A 285-amino-acid polypeptide reads, in one-letter code: Pantothenate synthetase (285 aa).

Met-30 to His-37 lines the ATP pocket. His-37 functions as the Proton donor in the catalytic mechanism. Gln-61 contacts (R)-pantoate. Beta-alanine is bound at residue Gln-61. Gly-149–Asp-152 is an ATP binding site. Residue Gln-155 participates in (R)-pantoate binding. Residues Val-178 and Leu-186–Arg-189 contribute to the ATP site.

It belongs to the pantothenate synthetase family. As to quaternary structure, homodimer.

The protein resides in the cytoplasm. The catalysed reaction is (R)-pantoate + beta-alanine + ATP = (R)-pantothenate + AMP + diphosphate + H(+). The protein operates within cofactor biosynthesis; (R)-pantothenate biosynthesis; (R)-pantothenate from (R)-pantoate and beta-alanine: step 1/1. Functionally, catalyzes the condensation of pantoate with beta-alanine in an ATP-dependent reaction via a pantoyl-adenylate intermediate. This Aeromonas hydrophila subsp. hydrophila (strain ATCC 7966 / DSM 30187 / BCRC 13018 / CCUG 14551 / JCM 1027 / KCTC 2358 / NCIMB 9240 / NCTC 8049) protein is Pantothenate synthetase.